Consider the following 816-residue polypeptide: Probable E3 ubiquitin-protein ligase hulA (816 aa).

In terms of domain architecture, C2 spans 1 to 112 (MGSNLPAQPN…QMGGDEMLTR (112 aa)). 2 disordered regions span residues 134–238 (NLST…GWER) and 254–354 (RTTT…YFVD). Over residues 160–178 (VPQVAPSSSHPAASGAAPV) the composition is skewed to low complexity. Polar residues predominate over residues 181 to 192 (SASNPSLNPQRV). Residues 193 to 213 (PSTTRPSSTAAPASAAGAAAS) show a composition bias toward low complexity. Polar residues-rich tracts occupy residues 214 to 227 (NTHG…SFED) and 254 to 267 (RTTT…NYNE). The region spanning 230-263 (GRLPAGWERREDNLGRTYYVDHNTRTTTWTRPSS) is the WW 1 domain. Over residues 268–295 (HAQRSQREANMQLERRAHQSRMLPEDRT) the composition is skewed to basic and acidic residues. Residues 296 to 310 (GANSPNLPESSQQAH) show a composition bias toward polar residues. Positions 325 to 334 (ATGATTAGTG) are enriched in low complexity. 2 WW domains span residues 334 to 367 (GELP…DPRR) and 394 to 427 (GPLP…DPRL). The 334-residue stretch at 483 to 816 (SASDLKKRLM…VEETLGFGQE (334 aa)) folds into the HECT domain. The active-site Glycyl thioester intermediate is Cys-784.

It belongs to the RSP5/NEDD4 family. Interacts with creD.

It is found in the cytoplasm. The enzyme catalyses S-ubiquitinyl-[E2 ubiquitin-conjugating enzyme]-L-cysteine + [acceptor protein]-L-lysine = [E2 ubiquitin-conjugating enzyme]-L-cysteine + N(6)-ubiquitinyl-[acceptor protein]-L-lysine.. It participates in protein modification; protein ubiquitination. Functionally, E3 ubiquitin-protein ligase which accepts ubiquitin from an E2 ubiquitin-conjugating enzyme in the form of a thioester and then directly transfers the ubiquitin to targeted substrates. Probably involved in the regulatory network controlling carbon source utilization. This is Probable E3 ubiquitin-protein ligase hulA (hulA) from Neosartorya fischeri (strain ATCC 1020 / DSM 3700 / CBS 544.65 / FGSC A1164 / JCM 1740 / NRRL 181 / WB 181) (Aspergillus fischerianus).